An 850-amino-acid chain; its full sequence is Mitogen-activated protein kinase kinase kinase 11 (850 aa).

Residue Ser-11 is modified to Phosphoserine. A disordered region spans residues 16 to 35 (WNGSGSGGGGGTGGVRPEGS). A compositionally biased stretch (gly residues) spans 17-31 (NGSGSGGGGGTGGVR). A Phosphoserine modification is found at Ser-35. Positions 42-106 (YANPVWTALF…PSNYVSRGGG (65 aa)) constitute an SH3 domain. The region spanning 118–380 (LRLEEVIGIG…ASILQQLEAL (263 aa)) is the Protein kinase domain. ATP contacts are provided by residues 124–132 (IGIGGFGKV) and Lys-145. Residue Asp-242 is the Proton acceptor of the active site. The residue at position 278 (Thr-278) is a Phosphothreonine; by autocatalysis. Ser-282 bears the Phosphoserine; by autocatalysis and MAP4K1 mark. Ser-395 carries the phosphoserine modification. Leucine-zipper regions lie at residues 404–425 (IQGLFDELRAKEKELLSREEEL) and 439–460 (LRRREHLLAQWELEVFERELTL). Residues Ser-508 and Ser-525 each carry the phosphoserine modification. The segment at 535 to 644 (QLEPTESGQT…SSGTPKLIQR (110 aa)) is disordered. Over residues 538–547 (PTESGQTWGR) the composition is skewed to polar residues. Ser-549, Ser-556, and Ser-557 each carry phosphoserine. Positions 551–563 (RRLEDSSNGERRA) are enriched in basic and acidic residues. Over residues 598–610 (SSPLGSPSTPPAL) the composition is skewed to low complexity. At Ser-655 the chain carries Phosphoserine. The interval 657–850 (GLGRDLQPPG…QAPWAPEAGP (194 aa)) is disordered. Residues 677–693 (TAPPPAQMPSPCPPELP) are compositionally biased toward pro residues. Positions 700–711 (LSQTTPDAHSSP) are enriched in polar residues. The residue at position 709 (Ser-709) is a Phosphoserine. Phosphothreonine is present on Thr-712. Ser-728, Ser-731, Ser-743, Ser-751, Ser-761, Ser-773, Ser-792, Ser-796, and Ser-818 each carry phosphoserine. Low complexity predominate over residues 763–776 (PLGLISRPRPSPLR). Residues 790–802 (RPSPLPSPQPAPR) show a composition bias toward pro residues. The segment covering 803-819 (RAPWTLFPDSDPFWDSP) has biased composition (low complexity).

The protein belongs to the protein kinase superfamily. STE Ser/Thr protein kinase family. MAP kinase kinase kinase subfamily. Homodimer; undergoes dimerization during activation. Interacts with MAP2K4/MKK4 and MAP2K7/MKK7. Found in a complex with SH3RF1, RAC1, MAP2K7/MKK7, MAPK8IP1/JIP1 and MAPK8/JNK1. It depends on Mg(2+) as a cofactor. Autophosphorylation on serine and threonine residues within the activation loop plays a role in enzyme activation. Thr-278 is likely to be the main autophosphorylation site. Phosphorylation of Ser-556 and Ser-557 is induced by CDC42.

The protein resides in the cytoplasm. It localises to the cytoskeleton. Its subcellular location is the microtubule organizing center. It is found in the centrosome. It carries out the reaction L-seryl-[protein] + ATP = O-phospho-L-seryl-[protein] + ADP + H(+). It catalyses the reaction L-threonyl-[protein] + ATP = O-phospho-L-threonyl-[protein] + ADP + H(+). With respect to regulation, homodimerization via the leucine zipper domains is required for autophosphorylation and subsequent activation. Activates the JUN N-terminal pathway. Required for serum-stimulated cell proliferation and for mitogen and cytokine activation of MAPK14 (p38), MAPK3 (ERK) and MAPK8 (JNK1) through phosphorylation and activation of MAP2K4/MKK4 and MAP2K7/MKK7. Plays a role in mitogen-stimulated phosphorylation and activation of BRAF, but does not phosphorylate BRAF directly. Influences microtubule organization during the cell cycle. The sequence is that of Mitogen-activated protein kinase kinase kinase 11 (Map3k11) from Mus musculus (Mouse).